The sequence spans 393 residues: Proteasome-activating nucleotidase (393 aa).

A coiled-coil region spans residues 15 to 53; it reads DEVQLVRLLEEKIKSLQIEIENLRKELNYYKAEMEKMLS. Residues 178–183 and Y317 each bind ATP; that span reads GTGKTM. Positions 365–393 form a coiled coil; it reads MNDLVEAINKINVKRNKMESMKERREKYS. The interval 391 to 393 is docks into pockets in the proteasome alpha-ring to cause gate opening; it reads KYS.

Belongs to the AAA ATPase family. Homohexamer. The hexameric complex has a two-ring architecture resembling a top hat that caps the 20S proteasome core at one or both ends. Upon ATP-binding, the C-terminus of PAN interacts with the alpha-rings of the proteasome core by binding to the intersubunit pockets.

Its subcellular location is the cytoplasm. Functionally, ATPase which is responsible for recognizing, binding, unfolding and translocation of substrate proteins into the archaeal 20S proteasome core particle. Is essential for opening the gate of the 20S proteasome via an interaction with its C-terminus, thereby allowing substrate entry and access to the site of proteolysis. Thus, the C-termini of the proteasomal ATPase function like a 'key in a lock' to induce gate opening and therefore regulate proteolysis. Unfolding activity requires energy from ATP hydrolysis, whereas ATP binding alone promotes ATPase-20S proteasome association which triggers gate opening, and supports translocation of unfolded substrates. In Saccharolobus solfataricus (strain ATCC 35092 / DSM 1617 / JCM 11322 / P2) (Sulfolobus solfataricus), this protein is Proteasome-activating nucleotidase.